A 399-amino-acid chain; its full sequence is MADSQRLSTASGVKDGQPPWKKKKLSNDTTSNPSLPYDVILIILARVSRSYYTNLSLVSKSFRSILTSPELYKTRTLLGKTENFLYVCLRFPDEANPRWFTLYRKPNQTLTDHTTKKKKKKKKKEEKSSVNLLAPISILNSHPVEWSAIISVDHYLYAISADIEKAPYSNVPYLDCRTHTWNEAPRMRLAHTNSEFEGIVYLPGSFESPDSLNCVEVYNTMTQTWKPVPPEKRMFKLENLEKKIYYKSFHLDSRAGKGLSLSYKSKHLTCGLVVLDTVDSYLRSSCMIENIAYFYRKGNFIWRGLDGKILVYGKIEGLEGLPKFSRYSSVQLAEYGGKLVVLWDKYVPASGYKEKMIWCAEISLEKRNGKEIWGNVEWFDAVLTVPKSYKILCATAATL.

Over residues 1–11 (MADSQRLSTAS) the composition is skewed to polar residues. The segment at 1–29 (MADSQRLSTASGVKDGQPPWKKKKLSNDT) is disordered. Residues 29 to 75 (TTSNPSLPYDVILIILARVSRSYYTNLSLVSKSFRSILTSPELYKTR) enclose the F-box domain. One copy of the Kelch repeat lies at 199 to 248 (IVYLPGSFESPDSLNCVEVYNTMTQTWKPVPPEKRMFKLENLEKKIYYKS).

This is F-box/kelch-repeat protein At5g48980 from Arabidopsis thaliana (Mouse-ear cress).